A 638-amino-acid polypeptide reads, in one-letter code: Growth hormone receptor (638 aa).

The N-terminal stretch at 1–18 is a signal peptide; it reads MDLWQLLLTLALAGSSDA. The Extracellular segment spans residues 19-264; the sequence is FSGSEATAAI…SQFTCEEDFY (246 aa). Asn46 is a glycosylation site (N-linked (GlcNAc...) asparagine). 2 disulfides stabilise this stretch: Cys56/Cys66 and Cys101/Cys112. Asn115 carries N-linked (GlcNAc...) asparagine glycosylation. Residues Cys126 and Cys140 are joined by a disulfide bond. One can recognise a Fibronectin type-III domain in the interval 151-254; it reads PPIALNWTLL…EVLYVTLPQM (104 aa). Asn156, Asn161, and Asn200 each carry an N-linked (GlcNAc...) asparagine glycan. The WSXWS motif motif lies at 240-244; the sequence is YGEFS. The segment at 260–262 is required for ADAM17-mediated proteolysis; that stretch reads EED. Residues 265 to 288 form a helical membrane-spanning segment; the sequence is FPWLLIIIFGIFGLTVMLFVFLFS. Topologically, residues 289 to 638 are cytoplasmic; the sequence is KQQRIKMLIL…STDQLNKIMP (350 aa). The interval 294–379 is required for JAK2 binding; the sequence is KMLILPPVPV…HEKSHSNLGV (86 aa). The short motif at 297 to 305 is the Box 1 motif element; sequence ILPPVPVPK. A UbE motif motif is present at residues 340 to 349; sequence DSWVEFIELD. Ser341 is subject to Phosphoserine. The interval 353–391 is disordered; it reads PDEKTEESDTDRLLSSDHEKSHSNLGVKDGDSGRTSCCE. The segment covering 362–384 has biased composition (basic and acidic residues); sequence TDRLLSSDHEKSHSNLGVKDGDS. Phosphotyrosine; by JAK2 is present on residues Tyr487 and Tyr595.

Belongs to the type I cytokine receptor family. Type 1 subfamily. As to quaternary structure, on growth hormone (GH) binding, forms homodimers and binds JAK2 via a box 1-containing domain. In terms of processing, the soluble form (GHBP) is produced by phorbol ester-promoted proteolytic cleavage at the cell surface (shedding) by ADAM17/TACE. Shedding is inhibited by growth hormone (GH) binding to the receptor probably due to a conformational change in GHR rendering the receptor inaccessible to ADAM17. On GH binding, phosphorylated on tyrosine residues in the cytoplasmic domain by JAK2. Post-translationally, ubiquitinated by the ECS(SOCS2) complex following ligand-binding and phosphorylation by JAK2, leading to its degradation by the proteasome. Regulation by the ECS(SOCS2) complex acts as a negative feedback loop of growth hormone receptor signaling. Ubiquitination is not sufficient for GHR internalization. As to expression, expressed in various tissues with high expression in liver and skeletal muscle. In terms of tissue distribution, isoform 2 is expressed in lung, stomach and muscle. Predominantly expressed in kidney, bladder, adrenal gland and brain stem. Highly expressed in placental villi.

It is found in the cell membrane. It localises to the secreted. Its function is as follows. Receptor for pituitary gland growth hormone (GH1) involved in regulating postnatal body growth. On ligand binding, couples to the JAK2/STAT5 pathway. In terms of biological role, the soluble form (GHBP) acts as a reservoir of growth hormone in plasma and may be a modulator/inhibitor of GH signaling. Up-regulates the production of the soluble Growth hormone-binding protein form (GHBP) and acts as a negative inhibitor of growth hormone signaling. This is Growth hormone receptor (GHR) from Homo sapiens (Human).